Reading from the N-terminus, the 294-residue chain is Agamous-like MADS-box protein AGL82 (294 aa).

Positions 1-51 (MVPKVVDLQRIANDKTRITTYKKRKASLYKKAQEFSTLCGVETCLIVYGPT) constitute an MADS-box domain.

In terms of assembly, interacts with MEE14/CBP1.

The protein resides in the nucleus. Its function is as follows. Probable transcription factor that may function in the maintenance of the proper function of the central cell in pollen tube attraction. In Arabidopsis thaliana (Mouse-ear cress), this protein is Agamous-like MADS-box protein AGL82.